A 130-amino-acid polypeptide reads, in one-letter code: Protein lgg-2 (130 aa).

The Phosphatidylethanolamine amidated glycine moiety is linked to residue glycine 130.

It belongs to the ATG8 family. May interact with vps-39. Interacts with lgg-3; the interaction is direct. Interacts with atg-16.1 (via WD domain) and atg-16.2 (via WD 5-6 repeats); the interactions are direct. Interacts with sepa-1 (via the LIR motifs); the interaction is direct. Interacts with sqst-1 (via the LIR motifs); the interaction is direct. Interacts with epg-2 (via the LIR motifs); the interaction is weak. Interacts with atg-7; the interaction is direct. Interacts with atg-3. The interaction with atg-7 and atg-3 may be required for the lipidation of lgg-2. Post-translationally, this protein is subject to lipidation. Lipidation is regulated by lgg-1.

Its subcellular location is the cytoplasmic vesicle. It localises to the autophagosome. The protein localises to the cytoplasm. It is found in the cell membrane. Ubiquitin-like modifier involved in the formation of autophagosomal vacuoles (autophagosomes). When lipidated mediates tethering between adjacent membranes and stimulates membrane fusion. Less effective at promoting membrane fusion than lgg-1. Acts upstream of the autophagy protein epg-5 in the aggrephagy pathway, which is the macroautophagic degradation of ubiquitinated protein aggregates, and preferentially interacts with autophagy proteins and substrates containing LIR motifs to mediate autophagosome formation and protein aggregate degradation. In particular binds to components of an atg-5-lgg-3-atg-16 complex to regulate autophagosome formation and cargo sequestration. Required for the degradation of specific sqst-1-containing aggregates during embryogenesis and the early stages of larval development. Involved in allophagy, which is an autophagic process in which paternal mitochondria and organelles are degraded during fertilization, and moreover is required for the degradation of lgg-1-positive allophagic autophagosomes in embryos. Involved in xenophagy, the autophagy-mediated degradation of pathogens and pathogen products, such as toxins. Also plays a role in membrane-pore repair. Through HOPS complex subunit vps-39, tethers lysosomes with autophagosomes to form autolysosomes. Plays a role in the distribution and clearance of germ cell specific P-granules from somatic cells to ensure exclusive localization of the P-granules in germ cells. Essential for dauer development and life-span extension. This is Protein lgg-2 from Caenorhabditis elegans.